Consider the following 353-residue polypeptide: Photosystem II D2 protein (353 aa).

Thr-2 carries the post-translational modification N-acetylthreonine. A Phosphothreonine modification is found at Thr-2. Residues 41–61 (CAYFALGGWLTGTTFVTSWYT) traverse the membrane as a helical segment. His-118 serves as a coordination point for chlorophyll a. A helical transmembrane segment spans residues 125–141 (GFMLRQFEIARSVQLRP). The pheophytin a site is built by Gln-130 and Asn-143. A helical transmembrane segment spans residues 153 to 166 (VFVSVFLIYPLGQS). His-198 is a chlorophyll a binding site. The helical transmembrane segment at 208–228 (AALLCAIHGATVENTIFEDGD) threads the bilayer. Residues His-215 and Phe-262 each coordinate a plastoquinone. His-215 contacts Fe cation. His-269 provides a ligand contact to Fe cation. A helical transmembrane segment spans residues 279-295 (GLWMSAVGVVGLAVNLR).

This sequence belongs to the reaction center PufL/M/PsbA/D family. As to quaternary structure, PSII is composed of 1 copy each of membrane proteins PsbA, PsbB, PsbC, PsbD, PsbE, PsbF, PsbH, PsbI, PsbJ, PsbK, PsbL, PsbM, PsbT, PsbX, PsbY, PsbZ, Psb30/Ycf12, at least 3 peripheral proteins of the oxygen-evolving complex and a large number of cofactors. It forms dimeric complexes. The D1/D2 heterodimer binds P680, chlorophylls that are the primary electron donor of PSII, and subsequent electron acceptors. It shares a non-heme iron and each subunit binds pheophytin, quinone, additional chlorophylls, carotenoids and lipids. There is also a Cl(-1) ion associated with D1 and D2, which is required for oxygen evolution. The PSII complex binds additional chlorophylls, carotenoids and specific lipids. serves as cofactor.

It localises to the plastid. Its subcellular location is the chloroplast thylakoid membrane. The catalysed reaction is 2 a plastoquinone + 4 hnu + 2 H2O = 2 a plastoquinol + O2. In terms of biological role, photosystem II (PSII) is a light-driven water:plastoquinone oxidoreductase that uses light energy to abstract electrons from H(2)O, generating O(2) and a proton gradient subsequently used for ATP formation. It consists of a core antenna complex that captures photons, and an electron transfer chain that converts photonic excitation into a charge separation. The D1/D2 (PsbA/PsbD) reaction center heterodimer binds P680, the primary electron donor of PSII as well as several subsequent electron acceptors. D2 is needed for assembly of a stable PSII complex. The chain is Photosystem II D2 protein from Chaetosphaeridium globosum (Charophycean green alga).